We begin with the raw amino-acid sequence, 216 residues long: Ethylene-responsive transcription factor ERF016 (216 aa).

Positions 6-63 form a DNA-binding region, AP2/ERF; sequence KYTGVRKRKWGKWVAEIRLPNSRDRIWLGSFDSAEKAARAFDAALYCLRGPGARFNFP. The segment at 121 to 145 is disordered; it reads EINSGSGGPTLGQVGEDNNNEGNSN. The segment covering 135–145 has biased composition (low complexity); it reads GEDNNNEGNSN.

Belongs to the AP2/ERF transcription factor family. ERF subfamily.

Its subcellular location is the nucleus. Its function is as follows. Probably acts as a transcriptional activator. Binds to the GCC-box pathogenesis-related promoter element. May be involved in the regulation of gene expression by stress factors and by components of stress signal transduction pathways. This Arabidopsis thaliana (Mouse-ear cress) protein is Ethylene-responsive transcription factor ERF016 (ERF016).